The primary structure comprises 289 residues: Protease HtpX homolog (289 aa).

2 helical membrane passes run 10–30 and 34–54; these read TAAL…VIGS and STTP…YGYW. Position 138 (His138) interacts with Zn(2+). Glu139 is a catalytic residue. His142 provides a ligand contact to Zn(2+). 2 helical membrane-spanning segments follow: residues 153-173 and 182-202; these read VAAA…IFGG and LAVM…QSAI. Position 207 (Glu207) interacts with Zn(2+).

Belongs to the peptidase M48B family. Zn(2+) serves as cofactor.

The protein resides in the cell membrane. The protein is Protease HtpX homolog of Arthrobacter sp. (strain FB24).